The primary structure comprises 92 residues: Probable Fe(2+)-trafficking protein (92 aa).

This sequence belongs to the Fe(2+)-trafficking protein family.

Functionally, could be a mediator in iron transactions between iron acquisition and iron-requiring processes, such as synthesis and/or repair of Fe-S clusters in biosynthetic enzymes. The protein is Probable Fe(2+)-trafficking protein of Xanthomonas oryzae pv. oryzae (strain MAFF 311018).